A 234-amino-acid chain; its full sequence is tRNA (guanine-N(1)-)-methyltransferase (234 aa).

S-adenosyl-L-methionine contacts are provided by residues Gly110 and 134 to 139 (IGDYVL).

Belongs to the RNA methyltransferase TrmD family. In terms of assembly, homodimer.

The protein resides in the cytoplasm. The enzyme catalyses guanosine(37) in tRNA + S-adenosyl-L-methionine = N(1)-methylguanosine(37) in tRNA + S-adenosyl-L-homocysteine + H(+). Functionally, specifically methylates guanosine-37 in various tRNAs. The polypeptide is tRNA (guanine-N(1)-)-methyltransferase (Tropheryma whipplei (strain TW08/27) (Whipple's bacillus)).